Here is a 260-residue protein sequence, read N- to C-terminus: Probable 6-oxopurine nucleoside phosphorylase (260 aa).

Phosphate-binding positions include serine 9 and 49–50; that span reads RH. Methionine 182 contacts substrate. Residue threonine 183 participates in phosphate binding. 206–208 contributes to the substrate binding site; sequence NMA.

This sequence belongs to the PNP/MTAP phosphorylase family. MTAP subfamily. In terms of assembly, homohexamer. Dimer of a homotrimer.

The enzyme catalyses a purine D-ribonucleoside + phosphate = a purine nucleobase + alpha-D-ribose 1-phosphate. Its pathway is purine metabolism; purine nucleoside salvage. Its function is as follows. Purine nucleoside phosphorylase which is highly specific for 6-oxopurine nucleosides. Cleaves guanosine or inosine to respective bases and sugar-1-phosphate molecules. Involved in purine salvage. The protein is Probable 6-oxopurine nucleoside phosphorylase of Moorella thermoacetica (strain ATCC 39073 / JCM 9320).